A 91-amino-acid chain; its full sequence is Small ribosomal subunit protein uS15c (91 aa).

The protein belongs to the universal ribosomal protein uS15 family. As to quaternary structure, part of the 30S ribosomal subunit.

Its subcellular location is the plastid. It is found in the chloroplast. In Adiantum capillus-veneris (Maidenhair fern), this protein is Small ribosomal subunit protein uS15c (rps15).